Consider the following 318-residue polypeptide: Pantothenate kinase (318 aa).

Residue 96 to 103 (GSVSVGKS) coordinates ATP.

This sequence belongs to the prokaryotic pantothenate kinase family.

It localises to the cytoplasm. The catalysed reaction is (R)-pantothenate + ATP = (R)-4'-phosphopantothenate + ADP + H(+). Its pathway is cofactor biosynthesis; coenzyme A biosynthesis; CoA from (R)-pantothenate: step 1/5. This is Pantothenate kinase from Bradyrhizobium sp. (strain BTAi1 / ATCC BAA-1182).